A 250-amino-acid chain; its full sequence is Pyrroloquinoline-quinone synthase (250 aa).

The protein belongs to the PqqC family.

The catalysed reaction is 6-(2-amino-2-carboxyethyl)-7,8-dioxo-1,2,3,4,7,8-hexahydroquinoline-2,4-dicarboxylate + 3 O2 = pyrroloquinoline quinone + 2 H2O2 + 2 H2O + H(+). It functions in the pathway cofactor biosynthesis; pyrroloquinoline quinone biosynthesis. In terms of biological role, ring cyclization and eight-electron oxidation of 3a-(2-amino-2-carboxyethyl)-4,5-dioxo-4,5,6,7,8,9-hexahydroquinoline-7,9-dicarboxylic-acid to PQQ. In Xanthomonas axonopodis pv. citri (strain 306), this protein is Pyrroloquinoline-quinone synthase.